The sequence spans 89 residues: Large ribosomal subunit protein bL27 (89 aa).

The disordered stretch occupies residues 1-21; it reads MAHKKGASSSRNGRDSNAQRL. Polar residues predominate over residues 7-19; that stretch reads ASSSRNGRDSNAQ.

The protein belongs to the bacterial ribosomal protein bL27 family.

In Frankia alni (strain DSM 45986 / CECT 9034 / ACN14a), this protein is Large ribosomal subunit protein bL27.